Here is a 67-residue protein sequence, read N- to C-terminus: uncharacterized protein (67 aa).

This is an uncharacterized protein from Swinepox virus (strain Kasza) (SWPV).